We begin with the raw amino-acid sequence, 512 residues long: MIKDMIDSIEQFAQTQADFPVYDCLGERRTYGQLKRDSDSIAAFIDSLALLAKSPVLVFGAQTYDMLATFVALTKSGHAYIPVDVHSAPERILAIIEIAKPSLIIAIEEFPLTIEGISLVSLSEIESAKLAEMPYERTHSVKGDDNYYIIFTSGTTGQPKGVQISHDNLLSFTNWMIEDAAFDVPKQPQMLAQPPYSFDLSVMYWAPTLALGGTLFALPKELVADFKQLFTTIAQLPVGIWTSTPSFADMAMLSDDFCQAKMPALTHFYFDGEELTVSTARKLFERFPSAKIINAYGPTEATVALSAIEITREMVDNYTRLPIGYPKPDSPTYIIDEDGKELSSGEQGEIIVTGPAVSKGYLNNPEKTAEAFFTFKGQPAYHTGDIGSLTEDNILLYGGRLDFQIKYAGYRIELEDVSQQLNQSPMVASAVAVPRYNKEHKVQNLLAYIVVKDGVKERFDRELELTKAIKASVKDHMMSYMMPSKFLYRDSLPLTPNGKIDIKTLINEVNNR.

152–153 (TS) lines the ATP pocket. Asp-199 provides a ligand contact to D-alanine. Position 294-299 (294-299 (NAYGPT)) interacts with ATP. Val-303 lines the D-alanine pocket. ATP contacts are provided by residues Asp-385, 397–400 (YGGR), and Lys-499. Residue Lys-499 participates in D-alanine binding.

Belongs to the ATP-dependent AMP-binding enzyme family. DltA subfamily.

Its subcellular location is the cytoplasm. It carries out the reaction holo-[D-alanyl-carrier protein] + D-alanine + ATP = D-alanyl-[D-alanyl-carrier protein] + AMP + diphosphate. It functions in the pathway cell wall biogenesis; lipoteichoic acid biosynthesis. In terms of biological role, catalyzes the first step in the D-alanylation of lipoteichoic acid (LTA), the activation of D-alanine and its transfer onto the D-alanyl carrier protein (Dcp) DltC. In an ATP-dependent two-step reaction, forms a high energy D-alanyl-AMP intermediate, followed by transfer of the D-alanyl residue as a thiol ester to the phosphopantheinyl prosthetic group of the Dcp. D-alanylation of LTA plays an important role in modulating the properties of the cell wall in Gram-positive bacteria, influencing the net charge of the cell wall. The protein is D-alanine--D-alanyl carrier protein ligase of Streptococcus pyogenes serotype M1.